Here is a 302-residue protein sequence, read N- to C-terminus: Probable 2-(5''-triphosphoribosyl)-3'-dephosphocoenzyme-A synthase 1 (302 aa).

This sequence belongs to the CitG/MdcB family.

It carries out the reaction 3'-dephospho-CoA + ATP = 2'-(5''-triphospho-alpha-D-ribosyl)-3'-dephospho-CoA + adenine. The polypeptide is Probable 2-(5''-triphosphoribosyl)-3'-dephosphocoenzyme-A synthase 1 (Salmonella paratyphi A (strain ATCC 9150 / SARB42)).